A 396-amino-acid chain; its full sequence is 1-deoxy-D-xylulose 5-phosphate reductoisomerase (396 aa).

Residues threonine 15, glycine 16, serine 17, isoleucine 18, glycine 41, and asparagine 129 each contribute to the NADPH site. Lysine 130 is a binding site for 1-deoxy-D-xylulose 5-phosphate. Glutamate 131 contacts NADPH. Aspartate 155 provides a ligand contact to Mn(2+). Residues serine 156, glutamate 157, serine 182, and histidine 205 each coordinate 1-deoxy-D-xylulose 5-phosphate. Residue glutamate 157 participates in Mn(2+) binding. An NADPH-binding site is contributed by glycine 211. Positions 218, 223, 224, and 227 each coordinate 1-deoxy-D-xylulose 5-phosphate. Mn(2+) is bound at residue glutamate 227.

Belongs to the DXR family. The cofactor is Mg(2+). Mn(2+) is required as a cofactor.

It catalyses the reaction 2-C-methyl-D-erythritol 4-phosphate + NADP(+) = 1-deoxy-D-xylulose 5-phosphate + NADPH + H(+). Its pathway is isoprenoid biosynthesis; isopentenyl diphosphate biosynthesis via DXP pathway; isopentenyl diphosphate from 1-deoxy-D-xylulose 5-phosphate: step 1/6. Catalyzes the NADPH-dependent rearrangement and reduction of 1-deoxy-D-xylulose-5-phosphate (DXP) to 2-C-methyl-D-erythritol 4-phosphate (MEP). The polypeptide is 1-deoxy-D-xylulose 5-phosphate reductoisomerase (Xanthomonas oryzae pv. oryzae (strain MAFF 311018)).